A 200-amino-acid chain; its full sequence is GTP cyclohydrolase 1 (200 aa).

Zn(2+) contacts are provided by Cys87, His90, and Cys158.

It belongs to the GTP cyclohydrolase I family. In terms of assembly, toroid-shaped homodecamer, composed of two pentamers of five dimers.

It carries out the reaction GTP + H2O = 7,8-dihydroneopterin 3'-triphosphate + formate + H(+). The protein operates within cofactor biosynthesis; 7,8-dihydroneopterin triphosphate biosynthesis; 7,8-dihydroneopterin triphosphate from GTP: step 1/1. In Xanthomonas euvesicatoria pv. vesicatoria (strain 85-10) (Xanthomonas campestris pv. vesicatoria), this protein is GTP cyclohydrolase 1.